Reading from the N-terminus, the 201-residue chain is Recombination protein RecR (201 aa).

Residues 59–74 form a C4-type zinc finger; it reads CEICGNMDTENICCIC. The Toprim domain occupies 82–177; the sequence is SVIAVVETVA…KISRLASGIP (96 aa).

This sequence belongs to the RecR family.

Its function is as follows. May play a role in DNA repair. It seems to be involved in an RecBC-independent recombinational process of DNA repair. It may act with RecF and RecO. The chain is Recombination protein RecR from Rickettsia felis (strain ATCC VR-1525 / URRWXCal2) (Rickettsia azadi).